The sequence spans 424 residues: Histidine--tRNA ligase (424 aa).

The protein belongs to the class-II aminoacyl-tRNA synthetase family. In terms of assembly, homodimer.

It is found in the cytoplasm. It carries out the reaction tRNA(His) + L-histidine + ATP = L-histidyl-tRNA(His) + AMP + diphosphate + H(+). This chain is Histidine--tRNA ligase, found in Protochlamydia amoebophila (strain UWE25).